A 158-amino-acid chain; its full sequence is SsrA-binding protein (158 aa).

The interval 131-158 (GKKTHDKRETEKKRDWNREKARLLRDRG) is disordered. Basic and acidic residues predominate over residues 136 to 158 (DKRETEKKRDWNREKARLLRDRG).

Belongs to the SmpB family.

The protein resides in the cytoplasm. Functionally, required for rescue of stalled ribosomes mediated by trans-translation. Binds to transfer-messenger RNA (tmRNA), required for stable association of tmRNA with ribosomes. tmRNA and SmpB together mimic tRNA shape, replacing the anticodon stem-loop with SmpB. tmRNA is encoded by the ssrA gene; the 2 termini fold to resemble tRNA(Ala) and it encodes a 'tag peptide', a short internal open reading frame. During trans-translation Ala-aminoacylated tmRNA acts like a tRNA, entering the A-site of stalled ribosomes, displacing the stalled mRNA. The ribosome then switches to translate the ORF on the tmRNA; the nascent peptide is terminated with the 'tag peptide' encoded by the tmRNA and targeted for degradation. The ribosome is freed to recommence translation, which seems to be the essential function of trans-translation. This Brucella abortus biovar 1 (strain 9-941) protein is SsrA-binding protein.